A 145-amino-acid chain; its full sequence is MSKKEVIIYTDGACSGNPGAGGWAAIILFQDYRKDIYGREENTTNNKMELTAVINGLKVLKFSCNINLYTDSLYVKHGITEWINKWKMNGWKTSNKKSVKNMELWKELDNVASQHEIDWKWVKAHSGDKYNEEADSLARKAIIDA.

The 142-residue stretch at 2–143 (SKKEVIIYTD…ADSLARKAII (142 aa)) folds into the RNase H type-1 domain. Mg(2+) contacts are provided by Asp-11, Glu-49, Asp-71, and Asp-135.

The protein belongs to the RNase H family. In terms of assembly, monomer. Requires Mg(2+) as cofactor.

The protein resides in the cytoplasm. It catalyses the reaction Endonucleolytic cleavage to 5'-phosphomonoester.. Functionally, endonuclease that specifically degrades the RNA of RNA-DNA hybrids. This chain is Ribonuclease H, found in Wolbachia pipientis wMel.